The primary structure comprises 336 residues: Holliday junction branch migration complex subunit RuvB (336 aa).

The segment at 1–182 (MKERIVNLET…FGMSFRMQFY (182 aa)) is large ATPase domain (RuvB-L). ATP contacts are provided by residues L21, R22, G63, K66, T67, S68, 129-131 (EDF), R172, Y182, and R219. T67 lines the Mg(2+) pocket. A small ATPAse domain (RuvB-S) region spans residues 183-253 (SPSELALIIK…ITLHALNELG (71 aa)). A head domain (RuvB-H) region spans residues 256-336 (ELGFDEADLA…IPTLKSQTLF (81 aa)). DNA-binding residues include R310 and R315.

The protein belongs to the RuvB family. As to quaternary structure, homohexamer. Forms an RuvA(8)-RuvB(12)-Holliday junction (HJ) complex. HJ DNA is sandwiched between 2 RuvA tetramers; dsDNA enters through RuvA and exits via RuvB. An RuvB hexamer assembles on each DNA strand where it exits the tetramer. Each RuvB hexamer is contacted by two RuvA subunits (via domain III) on 2 adjacent RuvB subunits; this complex drives branch migration. In the full resolvosome a probable DNA-RuvA(4)-RuvB(12)-RuvC(2) complex forms which resolves the HJ.

It is found in the cytoplasm. The catalysed reaction is ATP + H2O = ADP + phosphate + H(+). In terms of biological role, the RuvA-RuvB-RuvC complex processes Holliday junction (HJ) DNA during genetic recombination and DNA repair, while the RuvA-RuvB complex plays an important role in the rescue of blocked DNA replication forks via replication fork reversal (RFR). RuvA specifically binds to HJ cruciform DNA, conferring on it an open structure. The RuvB hexamer acts as an ATP-dependent pump, pulling dsDNA into and through the RuvAB complex. RuvB forms 2 homohexamers on either side of HJ DNA bound by 1 or 2 RuvA tetramers; 4 subunits per hexamer contact DNA at a time. Coordinated motions by a converter formed by DNA-disengaged RuvB subunits stimulates ATP hydrolysis and nucleotide exchange. Immobilization of the converter enables RuvB to convert the ATP-contained energy into a lever motion, pulling 2 nucleotides of DNA out of the RuvA tetramer per ATP hydrolyzed, thus driving DNA branch migration. The RuvB motors rotate together with the DNA substrate, which together with the progressing nucleotide cycle form the mechanistic basis for DNA recombination by continuous HJ branch migration. Branch migration allows RuvC to scan DNA until it finds its consensus sequence, where it cleaves and resolves cruciform DNA. This chain is Holliday junction branch migration complex subunit RuvB, found in Helicobacter pylori (strain G27).